The sequence spans 380 residues: Kappa-type opioid receptor (380 aa).

Over 1-57 the chain is Extracellular; sequence MDSPIQIFRGEPGPTCAPSACLPPNSSAWFPGWAEPDSNGSAGSEDAQLEPAHISPA. Asn-25 and Asn-39 each carry an N-linked (GlcNAc...) asparagine glycan. Residues 58-85 form a helical membrane-spanning segment; that stretch reads IPVIITAVYSVVFVVGLVGNSLVMFVII. Topologically, residues 86–95 are cytoplasmic; sequence RYTKMKTATN. The helical transmembrane segment at 96-119 threads the bilayer; sequence IYIFNLALADALVTTTMPFQSTVY. The Extracellular segment spans residues 120 to 132; the sequence is LMNSWPFGDVLCK. Cys-131 and Cys-210 form a disulfide bridge. Residues 133 to 154 traverse the membrane as a helical segment; it reads IVISIDYYNMFTSIFTLTMMSV. At 155-173 the chain is on the cytoplasmic side; it reads DRYIAVCHPVKALDFRTPL. Residues 174–196 traverse the membrane as a helical segment; that stretch reads KAKIINICIWLLSSSVGISAIVL. The Extracellular segment spans residues 197-222; sequence GGTKVREDVDVIECSLQFPDDDYSWW. Residues 223–247 traverse the membrane as a helical segment; sequence DLFMKICVFIFAFVIPVLIIIVCYT. Over 248 to 274 the chain is Cytoplasmic; the sequence is LMILRLKSVRLLSGSREKDRNLRRITR. The chain crosses the membrane as a helical span at residues 275-296; the sequence is LVLVVVAVFVVCWTPIHIFILV. At 297–311 the chain is on the extracellular side; it reads EALGSTSHSTAALSS. A helical transmembrane segment spans residues 312 to 333; that stretch reads YYFCIALGYTNSSLNPILYAFL. Residues 334-380 are Cytoplasmic-facing; it reads DENFKRCFRDFCFPLKMRMERQSTSRVRNTVQDPAYLRDIDGMNKPV. Residue Cys-345 is the site of S-palmitoyl cysteine attachment.

It belongs to the G-protein coupled receptor 1 family. Interacts with NHERF1. Interacts with GABARAPL1. In terms of tissue distribution, detected in brain and placenta.

It localises to the cell membrane. Functionally, G-protein coupled opioid receptor that functions as a receptor for endogenous alpha-neoendorphins and dynorphins, but has low affinity for beta-endorphins. Also functions as a receptor for various synthetic opioids and for the psychoactive diterpene salvinorin A. Ligand binding causes a conformation change that triggers signaling via guanine nucleotide-binding proteins (G proteins) and modulates the activity of down-stream effectors, such as adenylate cyclase. Signaling leads to the inhibition of adenylate cyclase activity. Inhibits neurotransmitter release by reducing calcium ion currents and increasing potassium ion conductance. Plays a role in the perception of pain. Plays a role in mediating reduced physical activity upon treatment with synthetic opioids. Plays a role in the regulation of salivation in response to synthetic opioids. May play a role in arousal and regulation of autonomic and neuroendocrine functions. This chain is Kappa-type opioid receptor (OPRK1), found in Homo sapiens (Human).